Reading from the N-terminus, the 432-residue chain is Glutamate-1-semialdehyde 2,1-aminomutase (432 aa).

The residue at position 265 (Lys265) is an N6-(pyridoxal phosphate)lysine.

It belongs to the class-III pyridoxal-phosphate-dependent aminotransferase family. HemL subfamily. As to quaternary structure, homodimer. Pyridoxal 5'-phosphate is required as a cofactor.

The protein localises to the cytoplasm. It catalyses the reaction (S)-4-amino-5-oxopentanoate = 5-aminolevulinate. It participates in porphyrin-containing compound metabolism; protoporphyrin-IX biosynthesis; 5-aminolevulinate from L-glutamyl-tRNA(Glu): step 2/2. This Histophilus somni (strain 2336) (Haemophilus somnus) protein is Glutamate-1-semialdehyde 2,1-aminomutase.